Reading from the N-terminus, the 96-residue chain is Co-chaperonin GroES 2 (96 aa).

It belongs to the GroES chaperonin family. As to quaternary structure, heptamer of 7 subunits arranged in a ring. Interacts with the chaperonin GroEL.

The protein resides in the cytoplasm. Functionally, together with the chaperonin GroEL, plays an essential role in assisting protein folding. The GroEL-GroES system forms a nano-cage that allows encapsulation of the non-native substrate proteins and provides a physical environment optimized to promote and accelerate protein folding. GroES binds to the apical surface of the GroEL ring, thereby capping the opening of the GroEL channel. The sequence is that of Co-chaperonin GroES 2 from Vibrio cholerae serotype O1 (strain ATCC 39315 / El Tor Inaba N16961).